Consider the following 464-residue polypeptide: MTEVKKGKINQILGPVVDVRFPSEWLPEINTALELNNHGSKLVLEVSQLVGDNIARCIAMDTTDGLVRGQEVINTQKPITMPVGKQVLGRMFNVTGDPIDEQPAPTGKRMPIHRPAPSFAEQAESIEILETGIKVVDLLVPFAKGGKIGLFGGAGVGKTVLMQELIHNIAKNHGGLSVFAGVGERTREGNDLYYEMAESDVLDKTALVFGQMNEPPGARMRVALSGLTMAEEFRDAFGQDVLLFIDNIFRFTQAGSEVSALLGRMPSAVGYQPTLAFEMGQLQERITSTKKGSITSVQAVYVPADDLTDPAPATTFSHLDAKVVLDRAIASLGLYPAISPLQSTSRLLDPLVVGVKHYSVARRVIEILQRFMELQDIIAILGMDELSEEDRQLVMRARKVRNYLSQPSHVAEKFSGQPGLSVKLEDTIEGFRKILDGECDDIHEQHFLYVGKIDDVFEKAAKNK.

152 to 159 serves as a coordination point for ATP; it reads GGAGVGKT.

It belongs to the ATPase alpha/beta chains family. In terms of assembly, F-type ATPases have 2 components, CF(1) - the catalytic core - and CF(0) - the membrane proton channel. CF(1) has five subunits: alpha(3), beta(3), gamma(1), delta(1), epsilon(1). CF(0) has three main subunits: a(1), b(2) and c(9-12). The alpha and beta chains form an alternating ring which encloses part of the gamma chain. CF(1) is attached to CF(0) by a central stalk formed by the gamma and epsilon chains, while a peripheral stalk is formed by the delta and b chains.

The protein resides in the cell membrane. It carries out the reaction ATP + H2O + 4 H(+)(in) = ADP + phosphate + 5 H(+)(out). Produces ATP from ADP in the presence of a proton gradient across the membrane. The catalytic sites are hosted primarily by the beta subunits. This chain is ATP synthase subunit beta, found in Ureaplasma parvum serovar 3 (strain ATCC 27815 / 27 / NCTC 11736).